Reading from the N-terminus, the 474-residue chain is 3-isopropylmalate dehydratase large subunit (474 aa).

Positions 353, 414, and 417 each coordinate [4Fe-4S] cluster.

The protein belongs to the aconitase/IPM isomerase family. LeuC type 1 subfamily. In terms of assembly, heterodimer of LeuC and LeuD. Requires [4Fe-4S] cluster as cofactor.

The enzyme catalyses (2R,3S)-3-isopropylmalate = (2S)-2-isopropylmalate. The protein operates within amino-acid biosynthesis; L-leucine biosynthesis; L-leucine from 3-methyl-2-oxobutanoate: step 2/4. Catalyzes the isomerization between 2-isopropylmalate and 3-isopropylmalate, via the formation of 2-isopropylmaleate. This chain is 3-isopropylmalate dehydratase large subunit, found in Pseudomonas paraeruginosa (strain DSM 24068 / PA7) (Pseudomonas aeruginosa (strain PA7)).